The following is a 361-amino-acid chain: Phospho-N-acetylmuramoyl-pentapeptide-transferase (361 aa).

10 helical membrane-spanning segments follow: residues 21–41 (YITL…FLVG), 73–93 (TMGG…WADL), 97–117 (FVWV…VDDW), 134–154 (YFWQ…TATV), 168–188 (LVLP…IVGT), 200–220 (GLAI…AYVA), 237–257 (AGEL…FLWF), 264–284 (VFMG…VAVI), 289–309 (IVLF…MLQV), and 338–358 (QVVV…LSTL).

The protein belongs to the glycosyltransferase 4 family. MraY subfamily. The cofactor is Mg(2+).

Its subcellular location is the cell inner membrane. It catalyses the reaction UDP-N-acetyl-alpha-D-muramoyl-L-alanyl-gamma-D-glutamyl-meso-2,6-diaminopimeloyl-D-alanyl-D-alanine + di-trans,octa-cis-undecaprenyl phosphate = di-trans,octa-cis-undecaprenyl diphospho-N-acetyl-alpha-D-muramoyl-L-alanyl-D-glutamyl-meso-2,6-diaminopimeloyl-D-alanyl-D-alanine + UMP. It functions in the pathway cell wall biogenesis; peptidoglycan biosynthesis. In terms of biological role, catalyzes the initial step of the lipid cycle reactions in the biosynthesis of the cell wall peptidoglycan: transfers peptidoglycan precursor phospho-MurNAc-pentapeptide from UDP-MurNAc-pentapeptide onto the lipid carrier undecaprenyl phosphate, yielding undecaprenyl-pyrophosphoryl-MurNAc-pentapeptide, known as lipid I. This is Phospho-N-acetylmuramoyl-pentapeptide-transferase from Methylobacillus flagellatus (strain ATCC 51484 / DSM 6875 / VKM B-1610 / KT).